The following is a 278-amino-acid chain: Thiazole synthase (278 aa).

K109 (schiff-base intermediate with DXP) is an active-site residue. 1-deoxy-D-xylulose 5-phosphate-binding positions include G170, 197 to 198 (AG), and 219 to 220 (NT).

Belongs to the ThiG family. In terms of assembly, homotetramer. Forms heterodimers with either ThiH or ThiS.

The protein localises to the cytoplasm. It carries out the reaction [ThiS sulfur-carrier protein]-C-terminal-Gly-aminoethanethioate + 2-iminoacetate + 1-deoxy-D-xylulose 5-phosphate = [ThiS sulfur-carrier protein]-C-terminal Gly-Gly + 2-[(2R,5Z)-2-carboxy-4-methylthiazol-5(2H)-ylidene]ethyl phosphate + 2 H2O + H(+). It participates in cofactor biosynthesis; thiamine diphosphate biosynthesis. In terms of biological role, catalyzes the rearrangement of 1-deoxy-D-xylulose 5-phosphate (DXP) to produce the thiazole phosphate moiety of thiamine. Sulfur is provided by the thiocarboxylate moiety of the carrier protein ThiS. In vitro, sulfur can be provided by H(2)S. This chain is Thiazole synthase, found in Cupriavidus taiwanensis (strain DSM 17343 / BCRC 17206 / CCUG 44338 / CIP 107171 / LMG 19424 / R1) (Ralstonia taiwanensis (strain LMG 19424)).